The primary structure comprises 266 residues: Hemin import ATP-binding protein HmuV (266 aa).

The region spanning 2–242 (IEAVDICVQR…QNLRDVYSCS (241 aa)) is the ABC transporter domain. Position 34-41 (34-41 (GPNGSGKS)) interacts with ATP.

It belongs to the ABC transporter superfamily. Heme (hemin) importer (TC 3.A.1.14.5) family. The complex is composed of two ATP-binding proteins (HmuV), two transmembrane proteins (HmuU) and a solute-binding protein (HmuT).

It is found in the cell inner membrane. Its function is as follows. Part of the ABC transporter complex HmuTUV involved in hemin import. Responsible for energy coupling to the transport system. The chain is Hemin import ATP-binding protein HmuV from Bartonella henselae (strain ATCC 49882 / DSM 28221 / CCUG 30454 / Houston 1) (Rochalimaea henselae).